A 391-amino-acid chain; its full sequence is Thioredoxin-interacting protein (391 aa).

K212 participates in a covalent cross-link: Glycyl lysine isopeptide (Lys-Gly) (interchain with G-Cter in ubiquitin). S361 carries the post-translational modification Phosphoserine.

It belongs to the arrestin family. In terms of assembly, homodimer; disulfide-linked. Interacts with TXN/thioredoxin through its redox-active site. Interacts with transcriptional repressors ZBTB16, ZBTB32 and HDAC1. Interacts with DDIT4. Post-translationally, ubiquitinated; undergoes heterotypic 'Lys-48'-/'Lys-63'-branched polyubiquitination catalyzed by ITCH and UBR5 resulting in proteasomal degradation. Deubiquitinated by USP5, leading to TXNIP stabilization.

The protein resides in the cytoplasm. The protein localises to the nucleus. Its function is as follows. May act as an oxidative stress mediator by inhibiting thioredoxin activity or by limiting its bioavailability. Interacts with COPS5 and restores COPS5-induced suppression of CDKN1B stability, blocking the COPS5-mediated translocation of CDKN1B from the nucleus to the cytoplasm. Functions as a transcriptional repressor, possibly by acting as a bridge molecule between transcription factors and corepressor complexes, and over-expression will induce G0/G1 cell cycle arrest. Required for the maturation of natural killer cells. Acts as a suppressor of tumor cell growth. Inhibits the proteasomal degradation of DDIT4, and thereby contributes to the inhibition of the mammalian target of rapamycin complex 1 (mTORC1). The polypeptide is Thioredoxin-interacting protein (TXNIP) (Homo sapiens (Human)).